Here is a 657-residue protein sequence, read N- to C-terminus: MTQLAIGKPAPLGAHYDGQGVNFTLFSAHAERVELCVFDANGQEHRYDLPGHSGDIWHGYLPDARPGLRYGYRVHGPWQPAEGHRFNPAKLLIDPCARQIDGEFKDNPLLHAGHNEPDYRDNAAIAPKCVVVVDHYDWEDDAPPRTPWGSTIIYEAHVKGLTYLHPEIPVEIRGTYKALGHPVMINYLKQLGITALELLPVAQFASEPRLQRMGLSNYWGYNPVAMFALHPAYACSPETALHEFRDAIKALHKAGIEVILDIVLNHSAELDLDGPLFSLRGIDNRSYYWIREDGDYHNWTGCGNTLNLSHPAVVDYASACLRYWVETCHVDGFRFDLAAVMGRTPEFRQDAPLFTAIQNCPVLSQVKLIAEPWDIAPGGYQVGNFPPLFAEWNDHFRDAARRFWLHYDLPLGAFAGRFAASSDVFKRNGRLPSAAINLVTAHDGFTLRDCVCFNHKHNEANGEENRDGTNNNYSNNHGKEGLGGSLDLVERRRDSIHALLTTLLLSQGTPMLLAGDEHGHSQHGNNNAYCQDNQLTWLDWSQASSGLTAFTAALIHLRKRIPALVENRWWEEGDGNVRWLNRYAQPLSTDEWQNGPKQLQILLSDRFLIAINATLEVTEIVLPAGEWHAIPPFAGEDNPVITAVWQGPAHGLCVFQR.

Asp-336 acts as the Nucleophile in catalysis. Residue Glu-371 is the Proton donor of the active site. The span at 458 to 467 (NEANGEENRD) shows a compositional bias: basic and acidic residues. The interval 458–479 (NEANGEENRDGTNNNYSNNHGK) is disordered.

This sequence belongs to the glycosyl hydrolase 13 family.

It carries out the reaction Hydrolysis of (1-&gt;6)-alpha-D-glucosidic linkages to branches with degrees of polymerization of three or four glucose residues in limit dextrin.. Its pathway is glycan degradation; glycogen degradation. Functionally, removes maltotriose and maltotetraose chains that are attached by 1,6-alpha-linkage to the limit dextrin main chain, generating a debranched limit dextrin. This is Glycogen debranching enzyme from Escherichia coli O8 (strain IAI1).